Reading from the N-terminus, the 518-residue chain is Type II methyltransferase M.HindII (518 aa).

The protein belongs to the N(4)/N(6)-methyltransferase family.

The catalysed reaction is a 2'-deoxyadenosine in DNA + S-adenosyl-L-methionine = an N(6)-methyl-2'-deoxyadenosine in DNA + S-adenosyl-L-homocysteine + H(+). A gamma subtype methylase, recognizes the double-stranded sequence 5'-GTYRAC-3', methylates A-5 on both strands, and protects the DNA from cleavage by the HindII endonuclease. This Haemophilus influenzae (strain ATCC 51907 / DSM 11121 / KW20 / Rd) protein is Type II methyltransferase M.HindII (hindIIM).